A 976-amino-acid polypeptide reads, in one-letter code: Probable basic-leucine zipper transcription factor Q (976 aa).

Coiled-coil stretches lie at residues 57–110 (AIDS…QYQQ) and 136–287 (QQQQ…QQQQ). Positions 104–128 (YQQQYQQPYTTPSPPDQIDYNQQLS) are disordered. Composition is skewed to polar residues over residues 374 to 385 (TNFNGTNNSTPN) and 393 to 411 (KLSSNNIKNTATPLSSPPS). A disordered region spans residues 374 to 499 (TNFNGTNNST…PIDSNGDFDL (126 aa)). 2 stretches are compositionally biased toward low complexity: residues 420-468 (PKNN…FNNN) and 476-490 (STTTPTITSPNMTSP). The bZIP domain occupies 504–567 (EKKKSISRIN…GVEVMRPEPE (64 aa)). The interval 505 to 507 (KKK) is basic motif. The tract at residues 509-516 (ISRINQNL) is leucine-zipper. Residues 855 to 938 (ENQSNNFGNN…VNSNNNNFNN (84 aa)) are compositionally biased toward low complexity. The segment at 855–957 (ENQSNNFGNN…SADAIPYPST (103 aa)) is disordered.

The protein belongs to the bZIP family.

The protein localises to the nucleus. Functionally, probable transcriptional regulator. The polypeptide is Probable basic-leucine zipper transcription factor Q (bzpQ) (Dictyostelium discoideum (Social amoeba)).